A 254-amino-acid polypeptide reads, in one-letter code: NAD-dependent protein deacylase 2 (254 aa).

One can recognise a Deacetylase sirtuin-type domain in the interval 1 to 254 (MDEHSIMQAV…LPALVRRLGV (254 aa)). 24 to 44 (GAGMSADSGLETYRDPETGVW) serves as a coordination point for NAD(+). Residues Tyr69 and Arg72 each contribute to the substrate site. Residue 105-108 (QNID) participates in NAD(+) binding. His123 functions as the Proton acceptor in the catalytic mechanism. Zn(2+) is bound by residues Cys131, Cys134, Cys157, and Cys160. Residues 197-199 (GTS) and Ala241 each bind NAD(+).

This sequence belongs to the sirtuin family. Class III subfamily. Zn(2+) is required as a cofactor.

The protein resides in the cytoplasm. It catalyses the reaction N(6)-acetyl-L-lysyl-[protein] + NAD(+) + H2O = 2''-O-acetyl-ADP-D-ribose + nicotinamide + L-lysyl-[protein]. The enzyme catalyses N(6)-succinyl-L-lysyl-[protein] + NAD(+) + H2O = 2''-O-succinyl-ADP-D-ribose + nicotinamide + L-lysyl-[protein]. In terms of biological role, NAD-dependent lysine deacetylase and desuccinylase that specifically removes acetyl and succinyl groups on target proteins. Modulates the activities of several proteins which are inactive in their acylated form. The polypeptide is NAD-dependent protein deacylase 2 (Corynebacterium efficiens (strain DSM 44549 / YS-314 / AJ 12310 / JCM 11189 / NBRC 100395)).